The following is a 647-amino-acid chain: Threonine--tRNA ligase (647 aa).

Residues 1–61 (MINITFPDGA…TEDGSIEIVT (61 aa)) enclose the TGS domain. A catalytic region spans residues 242–540 (DHRKLGKELD…LIENYKGAFP (299 aa)). The Zn(2+) site is built by cysteine 336, histidine 387, and histidine 517.

Belongs to the class-II aminoacyl-tRNA synthetase family. As to quaternary structure, homodimer. Zn(2+) is required as a cofactor.

It localises to the cytoplasm. The catalysed reaction is tRNA(Thr) + L-threonine + ATP = L-threonyl-tRNA(Thr) + AMP + diphosphate + H(+). Its function is as follows. Catalyzes the attachment of threonine to tRNA(Thr) in a two-step reaction: L-threonine is first activated by ATP to form Thr-AMP and then transferred to the acceptor end of tRNA(Thr). Also edits incorrectly charged L-seryl-tRNA(Thr). The polypeptide is Threonine--tRNA ligase (Streptococcus pneumoniae serotype 2 (strain D39 / NCTC 7466)).